The following is a 557-amino-acid chain: TWiK family of potassium channels protein 7 (557 aa).

2 disordered regions span residues methionine 1 to leucine 34 and aspartate 128 to glutamate 151. The Cytoplasmic segment spans residues methionine 1–histidine 165. The segment covering aspartate 134–glutamate 151 has biased composition (acidic residues). Residues valine 166–valine 186 form a helical membrane-spanning segment. Residues asparagine 220 and asparagine 237 are each glycosylated (N-linked (GlcNAc...) asparagine). The pore-forming intramembrane region spans serine 270–threonine 290. Residues isoleucine 295–leucine 315 traverse the membrane as a helical segment. Residues glycine 316–arginine 368 are Cytoplasmic-facing. The helical transmembrane segment at isoleucine 369–methionine 389 threads the bilayer. Residues phenylalanine 397–methionine 417 constitute an intramembrane region (pore-forming). A helical transmembrane segment spans residues isoleucine 426–glycine 446. Residues valine 447–lysine 557 lie on the Cytoplasmic side of the membrane.

It belongs to the two pore domain potassium channel (TC 1.A.1.8) family.

Its subcellular location is the membrane. This Caenorhabditis elegans protein is TWiK family of potassium channels protein 7 (twk-7).